Reading from the N-terminus, the 432-residue chain is Glutamate-1-semialdehyde 2,1-aminomutase 2 (432 aa).

At lysine 268 the chain carries N6-(pyridoxal phosphate)lysine.

Belongs to the class-III pyridoxal-phosphate-dependent aminotransferase family. HemL subfamily. Homodimer. Requires pyridoxal 5'-phosphate as cofactor.

It localises to the cytoplasm. The catalysed reaction is (S)-4-amino-5-oxopentanoate = 5-aminolevulinate. The protein operates within porphyrin-containing compound metabolism; protoporphyrin-IX biosynthesis; 5-aminolevulinate from L-glutamyl-tRNA(Glu): step 2/2. The sequence is that of Glutamate-1-semialdehyde 2,1-aminomutase 2 from Listeria monocytogenes serotype 4b (strain F2365).